The primary structure comprises 331 residues: Tryptophan--tRNA ligase 1 (331 aa).

ATP-binding positions include lysine 9–threonine 11 and glycine 17–asparagine 18. The short motif at proline 10–asparagine 18 is the 'HIGH' region element. Aspartate 137 contributes to the L-tryptophan binding site. Residues glycine 149–aspartate 151, valine 188, and lysine 197–serine 201 contribute to the ATP site. Residues lysine 197–serine 201 carry the 'KMSKS' region motif.

Belongs to the class-I aminoacyl-tRNA synthetase family. As to quaternary structure, homodimer.

It localises to the cytoplasm. It carries out the reaction tRNA(Trp) + L-tryptophan + ATP = L-tryptophyl-tRNA(Trp) + AMP + diphosphate + H(+). Functionally, catalyzes the attachment of tryptophan to tRNA(Trp). The sequence is that of Tryptophan--tRNA ligase 1 from Streptomyces avermitilis (strain ATCC 31267 / DSM 46492 / JCM 5070 / NBRC 14893 / NCIMB 12804 / NRRL 8165 / MA-4680).